Here is a 205-residue protein sequence, read N- to C-terminus: Type-4 uracil-DNA glycosylase (205 aa).

C13 and C16 together coordinate [4Fe-4S] cluster. Residues 40-42, F54, and N80 contribute to the uracil site; that span reads GEG. The [4Fe-4S] cluster site is built by C84 and C100. Residue H155 participates in uracil binding.

This sequence belongs to the uracil-DNA glycosylase (UDG) superfamily. Type 4 (UDGa) family. In terms of assembly, monomer.

The enzyme catalyses Hydrolyzes single-stranded DNA or mismatched double-stranded DNA and polynucleotides, releasing free uracil.. With respect to regulation, product-inhibited by apurinic/apyrimidinic sites. Its function is as follows. Removes uracil bases that are present in DNA as a result of either deamination of cytosine or misincorporation of dUMP instead of dTMP. Can remove uracil from double-stranded DNA containing either a U/G, U/A, U/C or U/T base pair as well as from single-stranded DNA. Specifically recognizes uracil that is flipped out from double-stranded DNA. The polypeptide is Type-4 uracil-DNA glycosylase (Thermus thermophilus (strain ATCC 27634 / DSM 579 / HB8)).